We begin with the raw amino-acid sequence, 728 residues long: MSALPGFTLAALLLNVSLAEANGLVLKKDLELKGSTVAGKEAPLFLTADRIDSTAVGIIEAAGRVEARQAGRNFFADWLRYDTRENSVQARGKVRLEQPALLVTGDSLDIDLDTYSGQLAAPVYRFVGQPGRGDAERIDFIDENNFSLADATYTTCSVEDEDWYLKIADLDIDRGRDVGTAHHASLRFLGVPILYTPWMSFPLGDARKSGILAPTIGTTERSGLDIVVPYYLNLAPNYDATLYPRLLSKRGVQLGGEFRYLLEDARGVNRVEYLDDSEAARTRWSVALNNSYRLNANTQAGMLFDRVSDDDYFRDLSNLISITSLSHLNREVWVTTQHAHWNAELRAQSFQTLQDSTASTPIAEPYARLPHARLGAAQTFGRFEFTLESEATRFAHPTKTEGTRVLAYPTLRMPLVNDYGFLTPQIGWHSTYYALDESAADDNIVRNLPIFSLDSGVVFDRPMRFSGVDFEQTLEPRVYYVYAPYRDQDDIPIFDTGLLDFSYAQMFTPNQFIGGDRINDANQLTVAVTSRFVEAESGLERLQVTLGQRYYFTPQRVTLPGVDPRSDNTTDLLAAVSGQITRDWRIDTAWQFDTQNGTVIRQNLGASYRPGPGRAINFGYRFIDQTTEQVDVSAQWPLGRRWYGMFRYNYSFQDDKLVEGLAGLEYNGGCWALRTVFQRLATKEDQSTDALFFQLELNGMGRLGSNPLDVLKQSVPGYRPSNEILPTP.

Residues 1-21 (MSALPGFTLAALLLNVSLAEA) form the signal peptide.

This sequence belongs to the LptD family. Component of the lipopolysaccharide transport and assembly complex. Interacts with LptE and LptA.

It localises to the cell outer membrane. Functionally, together with LptE, is involved in the assembly of lipopolysaccharide (LPS) at the surface of the outer membrane. In Thiobacillus denitrificans (strain ATCC 25259 / T1), this protein is LPS-assembly protein LptD.